Here is a 321-residue protein sequence, read N- to C-terminus: uncharacterized protein (321 aa).

The next 9 membrane-spanning stretches (helical) occupy residues 10-28 (LWCSFGVFLIIIIIIEMSI), 41-63 (IALYSSCISMLTAILFDVLIWIY), 94-111 (NVAMWFFLFQLFSISMVH), 116-138 (LFYGTFLALVFRSSIIFFGVWLL), 143-165 (FLFYVLSIILLFTGIITILSNGV), 200-222 (NGVIVATPLFLVLILIELNDIIF), 237-259 (PFIIITSSFFSIIGLRSIYVILA), 266-283 (YIIKYGITLILIFISIKI), and 293-315 (IMLSSFFIVCILVACFIIEKFFF).

Belongs to the TerC family.

The protein localises to the cell membrane. This is an uncharacterized protein from Buchnera aphidicola subsp. Baizongia pistaciae (strain Bp).